A 280-amino-acid chain; its full sequence is MNHYLNAFLRSIIEAVTEFLPVSSTGHLFLFSSFFPFSGESLEFDDLFDIFIQSGAILSVLFLYREKFGSQMLSSFQYLTKRNSDSQGFYFLVQIVIGAFPILVVGFIAKKFLDTIKARPDLLDILASAWIFGGVLILIAEWFFQKRQGTEEKKTVGFRDAILIGIFQCVALIPGVSRSAATIVTARFLGKDTKSSAEFSFFLAVPVLLAAGIYKLIKHRSILNEVTIPILAFGFLISFLLCTLVIRLFLRYLQKHSFGVFGIYRILLGVGVLVFTKFIR.

Helical transmembrane passes span 19–39 (FLPV…PFSG), 44–64 (FDDL…LFLY), 89–109 (FYFL…GFIA), 125–145 (ILAS…WFFQ), 156–176 (VGFR…IPGV), 197–217 (AEFS…YKLI), 226–246 (VTIP…TLVI), and 259–279 (GVFG…TKFI).

The protein belongs to the UppP family.

It is found in the cell inner membrane. The enzyme catalyses di-trans,octa-cis-undecaprenyl diphosphate + H2O = di-trans,octa-cis-undecaprenyl phosphate + phosphate + H(+). Functionally, catalyzes the dephosphorylation of undecaprenyl diphosphate (UPP). Confers resistance to bacitracin. This Leptospira borgpetersenii serovar Hardjo-bovis (strain L550) protein is Undecaprenyl-diphosphatase.